A 720-amino-acid polypeptide reads, in one-letter code: Proline-rich receptor-like protein kinase PERK12 (720 aa).

Residues 1–240 (MSDLGESPSS…GNGDGGGGGG (240 aa)) are disordered. Topologically, residues 1–246 (MSDLGESPSS…GGGGGYQGKT (246 aa)) are extracellular. Pro residues predominate over residues 10-25 (SSPPAPPADTAPPPET). Positions 26 to 35 (PSENSALPPV) are enriched in low complexity. Pro residues-rich tracts occupy residues 52–84 (LSEP…PSDS) and 92–116 (PSPP…PAPP). A glycan (N-linked (GlcNAc...) asparagine) is linked at N117. 2 stretches are compositionally biased toward pro residues: residues 123–138 (NPPP…PSSP) and 147–207 (PESP…PPKT). Residues 247–267 (MVGMAVAGFAIMALIGVVFLV) traverse the membrane as a helical segment. At 268–720 (RRKKKRNIDS…ETRPFNNRRF (453 aa)) the chain is on the cytoplasmic side. Residues 300-349 (QDPGKGYSSGPNGSMYNNSQQQQSSMGNSYGTAGGGYPHHQMQSSGTPDS) form a disordered region. Positions 311 to 330 (NGSMYNNSQQQQSSMGNSYG) are enriched in low complexity. Positions 371–624 (FARKNILGEG…EVFRMIETAA (254 aa)) constitute a Protein kinase domain. ATP contacts are provided by residues 377–385 (LGEGGFGCV) and K399. At Y444 the chain carries Phosphotyrosine. D495 (proton acceptor) is an active-site residue. S528 is modified (phosphoserine). Phosphothreonine is present on residues T529 and T534. Y542 carries the post-translational modification Phosphotyrosine. The tract at residues 698–720 (SAKSSSDFSGNESETRPFNNRRF) is disordered.

This sequence belongs to the protein kinase superfamily. Ser/Thr protein kinase family. Mostly expressed in apical parts, including flower buds, and particularly in anthers. Also present in root hairs.

The protein resides in the cell membrane. The enzyme catalyses L-seryl-[protein] + ATP = O-phospho-L-seryl-[protein] + ADP + H(+). It carries out the reaction L-threonyl-[protein] + ATP = O-phospho-L-threonyl-[protein] + ADP + H(+). Regulates the auxin-related MAX (More Axillary Growth) pathway during the shoot branching. In Arabidopsis thaliana (Mouse-ear cress), this protein is Proline-rich receptor-like protein kinase PERK12 (PERK12).